The sequence spans 369 residues: Histone deacetylase-like amidohydrolase (369 aa).

H143 acts as the Proton donor/acceptor in catalysis. Zn(2+) is bound by residues D180, H182, and D268.

Belongs to the histone deacetylase family. In terms of assembly, homotetramer; dimer of dimers. It depends on Zn(2+) as a cofactor.

Zinc, and cobalt and nickel at a lesser extent, are able to increase the catalytic activity (2.2-, 1.3- and 1.1-fold respectively) at concentrations of 1 mM. Higher concentrations have an inhibitory effect. Magnesium, manganese and calcium have no effect on activity at concentrations between 0 and 10 mM. At 100 mM, the catalytic activity is increased between 1.2- and 2.1-fold. Hydroxamates like TSA and SAHA inhibit the enzyme. Is also inhibited by azobenzenes, stilbenes and arylazopyrazoles. Exhibits significant levels of protein deacetylase activity comparable to those of eukaryotic HDACs in assays both with fluorogenic peptidic substrates and acetate-radiolabeled histones. Accepts proteins with epsilon-acetylated lysine residues and tritiated-acetate-prelabeled chicken histones as substrates. The natural substrate protein is not yet known. This Alcaligenes sp. (strain DSM 11172) (Bordetella sp. (strain FB188)) protein is Histone deacetylase-like amidohydrolase (hdaH).